Consider the following 400-residue polypeptide: Elongation factor Tu (400 aa).

One can recognise a tr-type G domain in the interval 10–208 (KPHVNVGTIG…AMDNYIPEPQ (199 aa)). The segment at 19-26 (GHIDHGKS) is G1. Residue 19–26 (GHIDHGKS) participates in GTP binding. Ser-26 is a binding site for Mg(2+). The tract at residues 60–64 (GITIN) is G2. Residues 81 to 84 (DCPG) are G3. Residues 81 to 85 (DCPGH) and 136 to 139 (NKTD) each bind GTP. Residues 136–139 (NKTD) are G4. The interval 174–176 (SAL) is G5.

This sequence belongs to the TRAFAC class translation factor GTPase superfamily. Classic translation factor GTPase family. EF-Tu/EF-1A subfamily. In terms of assembly, monomer.

It is found in the cytoplasm. It carries out the reaction GTP + H2O = GDP + phosphate + H(+). GTP hydrolase that promotes the GTP-dependent binding of aminoacyl-tRNA to the A-site of ribosomes during protein biosynthesis. The sequence is that of Elongation factor Tu from Thermotoga petrophila (strain ATCC BAA-488 / DSM 13995 / JCM 10881 / RKU-1).